Consider the following 269-residue polypeptide: MVRSILNKYNIKGGTFDQHFLIDIGYLDRIVVAAELSPQDTILEIGAGIGNLTERLARRAKKVIAVELDPALVSVLHDRFDKVENIEVIAGDALKVDFPEFDKVVSNLPYSISSEITFKLLRYKFKLGILMYQYEFAARMVSPPGRKDYSRLTVDTYYFADASILMKVPKGAFQPAPEVDSAVVKLVPRPSPFEVRDEAFFLEFVAAVFSQRRKKLRNSILNTNSMLKIPDIKEVVNQLPDDFVNKRAENLTPEELASVANMLFDLKSR.

S-adenosyl-L-methionine contacts are provided by histidine 19, leucine 21, glycine 46, glutamate 67, aspartate 92, and asparagine 107.

It belongs to the class I-like SAM-binding methyltransferase superfamily. rRNA adenine N(6)-methyltransferase family. RsmA subfamily.

It localises to the cytoplasm. Functionally, specifically dimethylates two adjacent adenosines in the loop of a conserved hairpin near the 3'-end of 16S rRNA in the 30S particle. May play a critical role in biogenesis of 30S subunits. The sequence is that of Probable ribosomal RNA small subunit methyltransferase A from Methanosarcina acetivorans (strain ATCC 35395 / DSM 2834 / JCM 12185 / C2A).